The following is a 326-amino-acid chain: N-acetyl-gamma-glutamyl-phosphate reductase (326 aa).

Cys155 is an active-site residue.

This sequence belongs to the NAGSA dehydrogenase family. Type 1 subfamily.

It is found in the cytoplasm. It catalyses the reaction N-acetyl-L-glutamate 5-semialdehyde + phosphate + NADP(+) = N-acetyl-L-glutamyl 5-phosphate + NADPH + H(+). Its pathway is amino-acid biosynthesis; L-arginine biosynthesis; N(2)-acetyl-L-ornithine from L-glutamate: step 3/4. In terms of biological role, catalyzes the NADPH-dependent reduction of N-acetyl-5-glutamyl phosphate to yield N-acetyl-L-glutamate 5-semialdehyde. The chain is N-acetyl-gamma-glutamyl-phosphate reductase from Shewanella denitrificans (strain OS217 / ATCC BAA-1090 / DSM 15013).